The primary structure comprises 1040 residues: Multidrug resistance protein MdtB (1040 aa).

11 helical membrane passes run 15–37 (LFIL…GIIG), 345–362 (FELM…YLFL), 367–389 (ATII…MVFL), 396–418 (LTLM…VIEN), 438–460 (GEIG…PLLF), 472–494 (FAVT…TPMM), 535–557 (HPWL…WIVI), 867–889 (VWLI…ESFI), 909–931 (LIIA…IGIV), 968–990 (ILMT…GVGT), and 1000–1022 (MVGG…YLLF).

Belongs to the resistance-nodulation-cell division (RND) (TC 2.A.6) family. MdtB subfamily. Part of a tripartite efflux system composed of MdtA, MdtB and MdtC. MdtB forms a heteromultimer with MdtC.

The protein localises to the cell inner membrane. The protein is Multidrug resistance protein MdtB of Salmonella typhimurium (strain LT2 / SGSC1412 / ATCC 700720).